Consider the following 101-residue polypeptide: Protein S100-A4 (101 aa).

Ala-2 is subject to N-acetylalanine. Lys-7 is modified (N6-acetyllysine). 2 EF-hand domains span residues 12 to 47 (MVSTFHKYSGKEGDKFKLNKSELKELLTRELPSFLG) and 50 to 85 (TDEAAFQKLMSNLDSNRDNEVDFQEYCVFLSCIAMM). Lys-28 and Glu-33 together coordinate Ca(2+). Lys-35 carries the post-translational modification N6-acetyllysine. Residues Asp-63, Asn-65, Asp-67, Glu-69, and Glu-74 each contribute to the Ca(2+) site.

It belongs to the S-100 family. Homodimer. Interacts with PPFIBP1 in a calcium-dependent mode. Interacts with PGLYRP1; this complex acts as a chemoattractant that promotes lymphocyte movement. Interacts with MYH9; this interaction increases cell motility. Interacts with Annexin 2/ANXA2. Interacts with TP53; this interaction promotes TP53 degradation. Interacts with CCR5. Interacts with FCGR3A; this interaction inhibits PKC-dependent phosphorylation of FCGR3A. Ubiquitously expressed.

The protein resides in the secreted. It is found in the nucleus. It localises to the cytoplasm. Functionally, calcium-binding protein that plays a role in various cellular processes including motility, angiogenesis, cell differentiation, apoptosis, and autophagy. Increases cell motility and invasiveness by interacting with non-muscle myosin heavy chain (NMMHC) IIA/MYH9. Mechanistically, promotes filament depolymerization and increases the amount of soluble myosin-IIA, resulting in the formation of stable protrusions facilitating chemotaxis. Also modulates the pro-apoptotic function of TP53 by binding to its C-terminal transactivation domain within the nucleus and reducing its protein levels. Within the extracellular space, stimulates cytokine production including granulocyte colony-stimulating factor and CCL24 from T-lymphocytes. In addition, stimulates T-lymphocyte chemotaxis by acting as a chemoattractant complex with PGLYRP1 that promotes lymphocyte migration via CCR5 and CXCR3 receptors. The protein is Protein S100-A4 (S100A4) of Homo sapiens (Human).